The following is a 222-amino-acid chain: WAP four-disulfide core domain protein 1 (222 aa).

The signal sequence occupies residues 1–32 (MDSRMLSDQRFCRRIFAAALCVLVLLADSGCA). Positions 61–110 (HYQKNDRCPPPPQTLPDRACEVPSCRSDSECERHKRCCYNGCIYACLESV) constitute a WAP domain. 4 disulfide bridges follow: Cys68–Cys98, Cys80–Cys102, Cys85–Cys97, and Cys91–Cys106.

Its subcellular location is the secreted. In terms of biological role, has growth inhibitory activity. The polypeptide is WAP four-disulfide core domain protein 1 (WFDC1) (Gallus gallus (Chicken)).